Here is a 211-residue protein sequence, read N- to C-terminus: Large ribosomal subunit protein uL3 (211 aa).

Gln-150 carries the post-translational modification N5-methylglutamine.

The protein belongs to the universal ribosomal protein uL3 family. As to quaternary structure, part of the 50S ribosomal subunit. Forms a cluster with proteins L14 and L19. In terms of processing, methylated by PrmB.

One of the primary rRNA binding proteins, it binds directly near the 3'-end of the 23S rRNA, where it nucleates assembly of the 50S subunit. In Pseudomonas syringae pv. syringae (strain B728a), this protein is Large ribosomal subunit protein uL3.